The chain runs to 223 residues: UPF0441 protein YgiB (223 aa).

Residues 178–195 (TVPKTAMAPKPATTTTVT) are compositionally biased toward low complexity. The interval 178-223 (TVPKTAMAPKPATTTTVTRGGFGESVAKQSTMQRSAAGTSTRSMGG) is disordered. The span at 204 to 223 (AKQSTMQRSAAGTSTRSMGG) shows a compositional bias: polar residues.

It belongs to the UPF0441 family.

The sequence is that of UPF0441 protein YgiB from Salmonella paratyphi B (strain ATCC BAA-1250 / SPB7).